The sequence spans 302 residues: GTPase Era (302 aa).

Residues 4 to 171 form the Era-type G domain; that stretch reads KAGFVALVGR…KEKIVSLLPE (168 aa). The tract at residues 12 to 19 is G1; that stretch reads GRTNVGKS. 12–19 is a binding site for GTP; sequence GRTNVGKS. The G2 stretch occupies residues 38–42; the sequence is QTTRN. The segment at 59 to 62 is G3; sequence DTPG. GTP contacts are provided by residues 59–63 and 121–124; these read DTPGI and NKID. Residues 121 to 124 form a G4 region; the sequence is NKID. The tract at residues 150-152 is G5; it reads ISA. Residues 202 to 280 form the KH type-2 domain; the sequence is LEEEVPHGVY…FLDLWVKTRK (79 aa).

It belongs to the TRAFAC class TrmE-Era-EngA-EngB-Septin-like GTPase superfamily. Era GTPase family. As to quaternary structure, monomer.

It localises to the cytoplasm. Its subcellular location is the cell membrane. In terms of biological role, an essential GTPase that binds both GDP and GTP, with rapid nucleotide exchange. Plays a role in 16S rRNA processing and 30S ribosomal subunit biogenesis and possibly also in cell cycle regulation and energy metabolism. This is GTPase Era from Thermoanaerobacter pseudethanolicus (strain ATCC 33223 / 39E) (Clostridium thermohydrosulfuricum).